Consider the following 473-residue polypeptide: Catalase easC (473 aa).

Positions 1–15 are enriched in low complexity; the sequence is MASEVSVASSGSEHS. Residues 1–31 form a disordered region; it reads MASEVSVASSGSEHSGAQKCPFQDPGLSSMD. His54 is a catalytic residue. Position 344 (Tyr344) interacts with heme. The segment at 369-388 is disordered; sequence DGARPEKAEMAPQKVPSQEH.

It belongs to the catalase family. Requires heme as cofactor.

It participates in alkaloid biosynthesis; ergot alkaloid biosynthesis. Catalase; part of the gene cluster that mediates the biosynthesis of fungal ergot alkaloid. DmaW catalyzes the first step of ergot alkaloid biosynthesis by condensing dimethylallyl diphosphate (DMAP) and tryptophan to form 4-dimethylallyl-L-tryptophan. The second step is catalyzed by the methyltransferase easF that methylates 4-dimethylallyl-L-tryptophan in the presence of S-adenosyl-L-methionine, resulting in the formation of 4-dimethylallyl-L-abrine. The catalase easC and the FAD-dependent oxidoreductase easE then transform 4-dimethylallyl-L-abrine to chanoclavine-I which is further oxidized by easD in the presence of NAD(+), resulting in the formation of chanoclavine-I aldehyde. Agroclavine dehydrogenase easG then mediates the conversion of chanoclavine-I aldehyde to agroclavine via a non-enzymatic adduct reaction: the substrate is an iminium intermediate that is formed spontaneously from chanoclavine-I aldehyde in the presence of glutathione. The presence of easA is not required to complete this reaction. Further conversion of agroclavine to paspalic acid is a two-step process involving oxidation of agroclavine to elymoclavine and of elymoclavine to paspalic acid, the second step being performed by the elymoclavine oxidase cloA. Paspalic acid is then further converted to D-lysergic acid. Ergopeptines are assembled from D-lysergic acid and three different amino acids by the D-lysergyl-peptide-synthetases composed each of a monomudular and a trimodular nonribosomal peptide synthetase subunit. LpsB and lpsC encode the monomodular subunits responsible for D-lysergic acid activation and incorporation into the ergopeptine backbone. LpsA1 and A2 subunits encode the trimodular nonribosomal peptide synthetase assembling the tripeptide portion of ergopeptines. LpsA1 is responsible for formation of the major ergopeptine, ergotamine, and lpsA2 for alpha-ergocryptine, the minor ergopeptine of the total alkaloid mixture elaborated by C.purpurea. D-lysergyl-tripeptides are assembled by the nonribosomal peptide synthetases and released as N-(D-lysergyl-aminoacyl)-lactams. Cyclolization of the D-lysergyl-tripeptides is performed by the Fe(2+)/2-ketoglutarate-dependent dioxygenase easH which introduces a hydroxyl group into N-(D-lysergyl-aminoacyl)-lactam at alpha-C of the aminoacyl residue followed by spontaneous condensation with the terminal lactam carbonyl group. The chain is Catalase easC from Claviceps purpurea (Ergot fungus).